We begin with the raw amino-acid sequence, 749 residues long: Ribosomal RNA large subunit methyltransferase K/L (749 aa).

In terms of domain architecture, THUMP spans 43–154 (QGYKVCLWSR…KDKATIYLDL (112 aa)). Positions 386–406 (VEPVAPKKTNKETPEPINPWT) are disordered.

This sequence belongs to the methyltransferase superfamily. RlmKL family.

Its subcellular location is the cytoplasm. The enzyme catalyses guanosine(2445) in 23S rRNA + S-adenosyl-L-methionine = N(2)-methylguanosine(2445) in 23S rRNA + S-adenosyl-L-homocysteine + H(+). It catalyses the reaction guanosine(2069) in 23S rRNA + S-adenosyl-L-methionine = N(2)-methylguanosine(2069) in 23S rRNA + S-adenosyl-L-homocysteine + H(+). In terms of biological role, specifically methylates the guanine in position 2445 (m2G2445) and the guanine in position 2069 (m7G2069) of 23S rRNA. The protein is Ribosomal RNA large subunit methyltransferase K/L of Psychromonas ingrahamii (strain DSM 17664 / CCUG 51855 / 37).